Reading from the N-terminus, the 223-residue chain is Endonuclease V (223 aa).

2 residues coordinate Mg(2+): aspartate 44 and aspartate 109.

This sequence belongs to the endonuclease V family. Mg(2+) serves as cofactor.

It is found in the cytoplasm. It carries out the reaction Endonucleolytic cleavage at apurinic or apyrimidinic sites to products with a 5'-phosphate.. In terms of biological role, DNA repair enzyme involved in the repair of deaminated bases. Selectively cleaves double-stranded DNA at the second phosphodiester bond 3' to a deoxyinosine leaving behind the intact lesion on the nicked DNA. The protein is Endonuclease V of Methanothrix thermoacetophila (strain DSM 6194 / JCM 14653 / NBRC 101360 / PT) (Methanosaeta thermophila).